The following is a 527-amino-acid chain: Probable glucomannan 4-beta-mannosyltransferase 9 (527 aa).

The chain crosses the membrane as a helical span at residues 37–59; the sequence is AMSVMLFVEKVYMSVVLVGVHLF. Aspartate 131 is a catalytic residue. Substrate contacts are provided by aspartate 190 and aspartate 192. The active site involves aspartate 284. Helical transmembrane passes span 363–383, 399–419, 478–498, and 505–525; these read IIGH…TVLI, IVTI…IFWV, ALEL…IAYG, and FLFL…GTIV.

It belongs to the glycosyltransferase 2 family. Plant cellulose synthase-like A subfamily.

It localises to the golgi apparatus membrane. It catalyses the reaction GDP-mannose + (glucomannan)n = GDP + (glucomannan)n+1.. In terms of biological role, probable mannan synthase which consists of a 4-beta-mannosyltransferase activity on mannan using GDP-mannose. The beta-1,4-mannan product is the backbone for galactomannan synthesis by galactomannan galactosyltransferase. Galactomannan is a noncellulosic polysaccharides of plant cell wall. This chain is Probable glucomannan 4-beta-mannosyltransferase 9, found in Oryza sativa subsp. japonica (Rice).